The sequence spans 92 residues: MARSVWKGPFVDGYLLKKAEKVREGGRSEVIKIWSRRSTIMPQFVGLTFGVYNGSKHIPVSVNEDMVGHKFGEFAPTRTYYGHGADKKAKRK.

It belongs to the universal ribosomal protein uS19 family.

In terms of biological role, protein S19 forms a complex with S13 that binds strongly to the 16S ribosomal RNA. This is Small ribosomal subunit protein uS19 from Rhizobium rhizogenes (strain K84 / ATCC BAA-868) (Agrobacterium radiobacter).